Here is a 203-residue protein sequence, read N- to C-terminus: Putative 3-methyladenine DNA glycosylase (203 aa).

It belongs to the DNA glycosylase MPG family.

This Clostridium botulinum (strain Loch Maree / Type A3) protein is Putative 3-methyladenine DNA glycosylase.